A 553-amino-acid chain; its full sequence is Keratin, type II cytoskeletal 6A (553 aa).

Over residues 1-20 (MSTKTTIKSQTSHRGYSASS) the composition is skewed to polar residues. Positions 1–21 (MSTKTTIKSQTSHRGYSASSA) are disordered. Residues 1–151 (MSTKTTIKSQ…DPTIQRVRTE (151 aa)) are head. The coil 1A stretch occupies residues 152 to 187 (EREQIKTLNNKFASFIDKVRFLEQQNKVLDTKWALL). In terms of domain architecture, IF rod spans 152–465 (EREQIKTLNN…KLLEGEECRL (314 aa)). The tract at residues 188–206 (QEQGTKTVRQNLEPMFEQY) is linker 1. The tract at residues 207–298 (ISNLRRQLDS…ALYEAELSQM (92 aa)) is coil 1B. Residues 299-322 (QTHISDTSVVLSMDNNRSLDLDSI) form a linker 12 region. A coil 2 region spans residues 323 to 461 (IAEVKAQYED…ATYRKLLEGE (139 aa)). The segment at 462–553 (ECRLNGEGVG…TSSSKKSYRQ (92 aa)) is tail. A disordered region spans residues 528–553 (LSSSGGLSSSTIKYTTTSSSKKSYRQ). Residues 531–553 (SGGLSSSTIKYTTTSSSKKSYRQ) show a composition bias toward low complexity.

The protein belongs to the intermediate filament family. Heterodimer of a type I and a type II keratin. KRT6 isomers associate with KRT16 and/or KRT17. Interacts with TCHP. Predominates in the adult trunk skin, tongue, trachea/esophagus and eye. In adult skin, localization is restricted to hair follicles, where it is localized predominantly in the outer root sheath.

Functionally, epidermis-specific type I keratin involved in wound healing. Involved in the activation of follicular keratinocytes after wounding, while it does not play a major role in keratinocyte proliferation or migration. Participates in the regulation of epithelial migration by inhibiting the activity of SRC during wound repair. The polypeptide is Keratin, type II cytoskeletal 6A (Krt6a) (Mus musculus (Mouse)).